Here is a 194-residue protein sequence, read N- to C-terminus: Imidazoleglycerol-phosphate dehydratase (194 aa).

This sequence belongs to the imidazoleglycerol-phosphate dehydratase family.

The protein resides in the cytoplasm. It catalyses the reaction D-erythro-1-(imidazol-4-yl)glycerol 3-phosphate = 3-(imidazol-4-yl)-2-oxopropyl phosphate + H2O. Its pathway is amino-acid biosynthesis; L-histidine biosynthesis; L-histidine from 5-phospho-alpha-D-ribose 1-diphosphate: step 6/9. The chain is Imidazoleglycerol-phosphate dehydratase from Bacillus velezensis (strain DSM 23117 / BGSC 10A6 / LMG 26770 / FZB42) (Bacillus amyloliquefaciens subsp. plantarum).